Consider the following 331-residue polypeptide: Centriolar satellite-associated tubulin polyglutamylase complex regulator 1 (331 aa).

The required for interaction with PCM1 stretch occupies residues 1 to 111 (MLSPERLALP…HCLLQLLCPD (111 aa)). The tract at residues 1-225 (MLSPERLALP…SCPPPALVKE (225 aa)) is required for interaction with TPGS1, LRRC49, and TTLL1. The required for interaction with TPGS2 stretch occupies residues 112-331 (FPLELTQKAA…STEETDESET (220 aa)). A disordered region spans residues 292–331 (SCLPSRTPPRVGSPWKPLHRSRKLDAESDGSTEETDESET). The span at 318 to 331 (ESDGSTEETDESET) shows a compositional bias: acidic residues. The residue at position 319 (S319) is a Phosphoserine.

It belongs to the CSTPP1 family. As to quaternary structure, interacts with PCM1. Interacts with TTLL1, TPGS1, TPGS2 and LRRC49; the interactions link CSTPP1 to the complex TPGC. Binds to alpha-tubulin.

The protein resides in the cytoplasm. It localises to the cytoskeleton. The protein localises to the microtubule organizing center. It is found in the centrosome. Its subcellular location is the centriolar satellite. Regulator of the tubulin polyglutamylase complex (TPGC) that controls cytoskeletal organization, nuclear shape, and cilium disassembly by balancing microtubule and actin assembly. Regulates the assembly and stability of the TPGC and thereby modulates polyglutamylation of the microtubule, which antagonizes MAP4 binding. The polypeptide is Centriolar satellite-associated tubulin polyglutamylase complex regulator 1 (Cstpp1) (Rattus norvegicus (Rat)).